The following is a 373-amino-acid chain: Probable leucine aminopeptidase 1 (373 aa).

A signal peptide spans 1–18; the sequence is MKLLSVLALSATATSVLG. Residues H176 and D195 each coordinate Zn(2+). N196 carries an N-linked (GlcNAc...) asparagine glycan. Zn(2+)-binding residues include E234 and D261. Residue N288 is glycosylated (N-linked (GlcNAc...) asparagine). A disulfide bridge connects residues C310 and C314. H343 contributes to the Zn(2+) binding site.

Belongs to the peptidase M28 family. M28E subfamily. Monomer. It depends on Zn(2+) as a cofactor.

It localises to the secreted. Functionally, extracellular aminopeptidase which contributes to pathogenicity. In Trichophyton verrucosum (strain HKI 0517), this protein is Probable leucine aminopeptidase 1 (LAP1).